The primary structure comprises 304 residues: UDP-N-acetylenolpyruvoylglucosamine reductase (304 aa).

The 166-residue stretch at 33–198 (KVGGPVDILL…LRATFNLVNG (166 aa)) folds into the FAD-binding PCMH-type domain. The active site involves arginine 177. The active-site Proton donor is serine 227. The active site involves glutamate 297.

The protein belongs to the MurB family. Requires FAD as cofactor.

It localises to the cytoplasm. It carries out the reaction UDP-N-acetyl-alpha-D-muramate + NADP(+) = UDP-N-acetyl-3-O-(1-carboxyvinyl)-alpha-D-glucosamine + NADPH + H(+). It participates in cell wall biogenesis; peptidoglycan biosynthesis. Cell wall formation. This Clostridium beijerinckii (strain ATCC 51743 / NCIMB 8052) (Clostridium acetobutylicum) protein is UDP-N-acetylenolpyruvoylglucosamine reductase.